We begin with the raw amino-acid sequence, 532 residues long: CTP synthase (532 aa).

Residues 1 to 267 (MAKFIFVTGG…QDIIIEQLQL (267 aa)) form an amidoligase domain region. Ser13 contributes to the CTP binding site. Ser13 provides a ligand contact to UTP. 14–19 (GLGKGI) contributes to the ATP binding site. Tyr54 serves as a coordination point for L-glutamine. Asp71 contributes to the ATP binding site. Mg(2+)-binding residues include Asp71 and Glu141. CTP-binding positions include 148–150 (DIE), 188–193 (KTKPIQ), and Lys224. UTP contacts are provided by residues 188 to 193 (KTKPIQ) and Lys224. Residues 292–532 (EISFVGKYIE…FIKAIVENNK (241 aa)) form the Glutamine amidotransferase type-1 domain. An L-glutamine-binding site is contributed by Gly354. Cys381 acts as the Nucleophile; for glutamine hydrolysis in catalysis. Residues 382-385 (LGMQ), Glu405, and Arg461 contribute to the L-glutamine site. Active-site residues include His506 and Glu508.

The protein belongs to the CTP synthase family. Homotetramer.

The catalysed reaction is UTP + L-glutamine + ATP + H2O = CTP + L-glutamate + ADP + phosphate + 2 H(+). It carries out the reaction L-glutamine + H2O = L-glutamate + NH4(+). It catalyses the reaction UTP + NH4(+) + ATP = CTP + ADP + phosphate + 2 H(+). The protein operates within pyrimidine metabolism; CTP biosynthesis via de novo pathway; CTP from UDP: step 2/2. With respect to regulation, allosterically activated by GTP, when glutamine is the substrate; GTP has no effect on the reaction when ammonia is the substrate. The allosteric effector GTP functions by stabilizing the protein conformation that binds the tetrahedral intermediate(s) formed during glutamine hydrolysis. Inhibited by the product CTP, via allosteric rather than competitive inhibition. Functionally, catalyzes the ATP-dependent amination of UTP to CTP with either L-glutamine or ammonia as the source of nitrogen. Regulates intracellular CTP levels through interactions with the four ribonucleotide triphosphates. The sequence is that of CTP synthase from Mycoplasma mycoides subsp. mycoides SC (strain CCUG 32753 / NCTC 10114 / PG1).